We begin with the raw amino-acid sequence, 483 residues long: Aspartyl/glutamyl-tRNA(Asn/Gln) amidotransferase subunit B (483 aa).

Belongs to the GatB/GatE family. GatB subfamily. Heterotrimer of A, B and C subunits.

It carries out the reaction L-glutamyl-tRNA(Gln) + L-glutamine + ATP + H2O = L-glutaminyl-tRNA(Gln) + L-glutamate + ADP + phosphate + H(+). It catalyses the reaction L-aspartyl-tRNA(Asn) + L-glutamine + ATP + H2O = L-asparaginyl-tRNA(Asn) + L-glutamate + ADP + phosphate + 2 H(+). Its function is as follows. Allows the formation of correctly charged Asn-tRNA(Asn) or Gln-tRNA(Gln) through the transamidation of misacylated Asp-tRNA(Asn) or Glu-tRNA(Gln) in organisms which lack either or both of asparaginyl-tRNA or glutaminyl-tRNA synthetases. The reaction takes place in the presence of glutamine and ATP through an activated phospho-Asp-tRNA(Asn) or phospho-Glu-tRNA(Gln). In Rickettsia conorii (strain ATCC VR-613 / Malish 7), this protein is Aspartyl/glutamyl-tRNA(Asn/Gln) amidotransferase subunit B.